The sequence spans 153 residues: Endoribonuclease YbeY (153 aa).

Zn(2+)-binding residues include histidine 114, histidine 118, and histidine 124.

This sequence belongs to the endoribonuclease YbeY family. Requires Zn(2+) as cofactor.

It localises to the cytoplasm. Functionally, single strand-specific metallo-endoribonuclease involved in late-stage 70S ribosome quality control and in maturation of the 3' terminus of the 16S rRNA. This is Endoribonuclease YbeY from Shewanella amazonensis (strain ATCC BAA-1098 / SB2B).